The sequence spans 354 residues: UDP-N-acetylglucosamine--N-acetylmuramyl-(pentapeptide) pyrophosphoryl-undecaprenol N-acetylglucosamine transferase (354 aa).

Residues 13–15, Asn125, Arg161, Ser189, Ile242, 261–266, and Gln286 contribute to the UDP-N-acetyl-alpha-D-glucosamine site; these read SGG and ALTVSE.

It belongs to the glycosyltransferase 28 family. MurG subfamily.

Its subcellular location is the cell inner membrane. It carries out the reaction di-trans,octa-cis-undecaprenyl diphospho-N-acetyl-alpha-D-muramoyl-L-alanyl-D-glutamyl-meso-2,6-diaminopimeloyl-D-alanyl-D-alanine + UDP-N-acetyl-alpha-D-glucosamine = di-trans,octa-cis-undecaprenyl diphospho-[N-acetyl-alpha-D-glucosaminyl-(1-&gt;4)]-N-acetyl-alpha-D-muramoyl-L-alanyl-D-glutamyl-meso-2,6-diaminopimeloyl-D-alanyl-D-alanine + UDP + H(+). The protein operates within cell wall biogenesis; peptidoglycan biosynthesis. Its function is as follows. Cell wall formation. Catalyzes the transfer of a GlcNAc subunit on undecaprenyl-pyrophosphoryl-MurNAc-pentapeptide (lipid intermediate I) to form undecaprenyl-pyrophosphoryl-MurNAc-(pentapeptide)GlcNAc (lipid intermediate II). This chain is UDP-N-acetylglucosamine--N-acetylmuramyl-(pentapeptide) pyrophosphoryl-undecaprenol N-acetylglucosamine transferase, found in Buchnera aphidicola subsp. Schizaphis graminum (strain Sg).